Consider the following 238-residue polypeptide: Probable transcriptional regulatory protein YeeN (238 aa).

This sequence belongs to the TACO1 family. YeeN subfamily.

The protein resides in the cytoplasm. The sequence is that of Probable transcriptional regulatory protein YeeN from Salmonella typhimurium (strain LT2 / SGSC1412 / ATCC 700720).